The sequence spans 267 residues: Glucosamine-6-phosphate deaminase (267 aa).

Catalysis depends on D72, which acts as the Proton acceptor; for enolization step. The active-site For ring-opening step is the D141. Catalysis depends on H143, which acts as the Proton acceptor; for ring-opening step. Catalysis depends on E148, which acts as the For ring-opening step.

This sequence belongs to the glucosamine/galactosamine-6-phosphate isomerase family. NagB subfamily. As to quaternary structure, homohexamer.

The catalysed reaction is alpha-D-glucosamine 6-phosphate + H2O = beta-D-fructose 6-phosphate + NH4(+). It participates in amino-sugar metabolism; N-acetylneuraminate degradation; D-fructose 6-phosphate from N-acetylneuraminate: step 5/5. With respect to regulation, allosterically activated by N-acetylglucosamine 6-phosphate (GlcNAc6P). Catalyzes the reversible isomerization-deamination of glucosamine 6-phosphate (GlcN6P) to form fructose 6-phosphate (Fru6P) and ammonium ion. The sequence is that of Glucosamine-6-phosphate deaminase from Haemophilus ducreyi (strain 35000HP / ATCC 700724).